The following is a 206-amino-acid chain: Large ribosomal subunit protein bL25 (206 aa).

It belongs to the bacterial ribosomal protein bL25 family. CTC subfamily. As to quaternary structure, part of the 50S ribosomal subunit; part of the 5S rRNA/L5/L18/L25 subcomplex. Contacts the 5S rRNA. Binds to the 5S rRNA independently of L5 and L18.

This is one of the proteins that binds to the 5S RNA in the ribosome where it forms part of the central protuberance. The chain is Large ribosomal subunit protein bL25 from Bartonella henselae (strain ATCC 49882 / DSM 28221 / CCUG 30454 / Houston 1) (Rochalimaea henselae).